The following is a 963-amino-acid chain: MATAAATSASEPEAESKAGPKADGEEDEVKAARTRRKVLSRAVAAATYKTMGPGWDQQEEGVSESDGDEYAMASSAESSPGEYEWEYDEEEEKNQLEIERLEEQLSINVYDYNCHVDLIRLLRLEGELTKVRMARQKMSEIFPLTEELWLEWLHDEISMAQDGLDREHVYDLFEKAVKDYICPNIWLEYGQYSVGGIGQKGGLEKVRSVFERALSSVGLHMSKGLALWEAYREFESAIVEAARLEKVHSLFRRQLAIPLYDMEATFAEYEEWSEDPIPESVIQNYNKALQQLEKYKPYEEALLQAEAPRLAEYQAYIDFEMKIGDPARIQLIFERALVENCLVPDLWIRYSQYLDRQLKVKDLVLSVHNRAIRNCPWTVALWSRYLLAMERHGVDHQVISVTFEKALNAGFIQATDYVEIWQAYLDYLRRRVDFKQDSSKELEELRAAFTRALEYLKQEVEERFNESGDPSCVIMQNWARIEARLCNNMQKARELWDSIMTRGNAKYANMWLEYYNLERAHGDTQHCRKALHRAVQCTSDYPEHVCEVLLTMERTEGSLEDWDIAVQKTETRLARVNEQRMKAAEKEAALVQQEEEKAEQRKRARAEKKALKKKKKIRGPEKRGADEDDEKEWGDDEEEQPSKRRRVENSIPAAGETQNVEVAPGPAGKCAAVDVEPPSKQKEKAASLKRDMPKVLHDSSKDSITVFVSNLPYSMQEPDAKLRPLFEACGEVVQIRPIFSNRGDFRGYCYVEFKEEKSALQALEMDRKSVEGRPMFVSPCVDKSKNPDFKVFRYSTSLEKHKLFISGLPFSCTKEELEEICKAHGTVKDLRLVTNRAGKPKGLAYVEYENESQASQAVMKMDGMTIKENVIKVAISNPPQRKVPEKPETRKAPGGPTLLPQTYGARGKGRTQLSLLPRALQRPGAAAPQAENGPAAAPAVAAPAATEAPKMSNADFAKLFLRK.

The span at 1–11 (MATAAATSASE) shows a compositional bias: low complexity. 2 disordered regions span residues 1–36 (MATA…RTRR) and 49–86 (KTMG…YEWE). Ala-2 is modified (N-acetylalanine). The segment at 2–351 (ATAAATSASE…LVPDLWIRYS (350 aa)) is mediates interaction with PRPF3. Ser-10 and Ser-16 each carry phosphoserine. The span at 14 to 23 (AESKAGPKAD) shows a compositional bias: basic and acidic residues. The stretch at 21–46 (KADGEEDEVKAARTRRKVLSRAVAAA) forms a coiled coil. The span at 57-69 (QQEEGVSESDGDE) shows a compositional bias: acidic residues. Positions 82 to 110 (EYEWEYDEEEEKNQLEIERLEEQLSINVY) form a coiled coil. HAT repeat units follow at residues 126-158 (GELT…DEIS), 164-195 (LDRE…YSVG), 201-237 (GGLE…FESA), 242-275 (ARLE…WSED), 324-356 (GDPA…YLDR), 359-391 (KVKD…AMER), 394-430 (VDHQ…YLRR), and 487-520 (NNMQ…LERA). Ser-215 is modified (phosphoserine). The required for interaction with USP4 stretch occupies residues 487–520 (NNMQKARELWDSIMTRGNAKYANMWLEYYNLERA). The tract at residues 537–953 (CTSDYPEHVC…AATEAPKMSN (417 aa)) is necessary and sufficient for U6 snRNA binding. A coiled-coil region spans residues 559-619 (LEDWDIAVQK…ALKKKKKIRG (61 aa)). Residues 600-670 (QRKRARAEKK…EVAPGPAGKC (71 aa)) are required for nuclear localization. The short motif at 601–608 (RKRARAEK) is the Nuclear localization signal element. The segment covering 608–619 (KKALKKKKKIRG) has biased composition (basic and acidic residues). The interval 608–712 (KKALKKKKKI…SITVFVSNLP (105 aa)) is disordered. Positions 620–635 (PEKRGADEDDEKEWGD) are enriched in basic residues. Residues 644 to 657 (RRRVENSIPAAGET) show a composition bias toward acidic residues. A Phosphoserine modification is found at Ser-650. Thr-657 bears the Phosphothreonine mark. Residues 695-712 (VLHDSSKDSITVFVSNLP) show a composition bias toward basic and acidic residues. One can recognise an RRM 1 domain in the interval 704–782 (ITVFVSNLPY…RPMFVSPCVD (79 aa)). Phosphoserine is present on residues Ser-769, Ser-795, and Ser-852. The region spanning 801-878 (HKLFISGLPF…NVIKVAISNP (78 aa)) is the RRM 2 domain. Residues 900 to 909 (PQTYGARGKG) are compositionally biased toward basic and acidic residues. Arg-906 is modified (omega-N-methylarginine).

As to quaternary structure, component of the 7SK snRNP complex at least composed of P-TEFb (composed of CDK9 and CCNT1/cyclin-T1), HEXIM1, HEXIM2, BCDIN3, SART3 proteins and 7SK and U6 snRNAs. Interacts with AGO1 and AGO2. Interacts with PRPF3 and USP4; the interaction with PRPF3 is direct and recruits USP4 to its substrate PRPF3. Interacts with USP15; the interaction is direct.

Its subcellular location is the nucleus. The protein resides in the nucleoplasm. It is found in the cajal body. It localises to the nucleus speckle. The protein localises to the cytoplasm. In terms of biological role, U6 snRNP-binding protein that functions as a recycling factor of the splicing machinery. Promotes the initial reassembly of U4 and U6 snRNPs following their ejection from the spliceosome during its maturation. Also binds U6atac snRNPs and may function as a recycling factor for U4atac/U6atac spliceosomal snRNP, an initial step in the assembly of U12-type spliceosomal complex. The U12-type spliceosomal complex plays a role in the splicing of introns with non-canonical splice sites. May also function as a substrate-targeting factor for deubiquitinases like USP4 and USP15. Recruits USP4 to ubiquitinated PRPF3 within the U4/U5/U6 tri-snRNP complex, promoting PRPF3 deubiquitination and thereby regulating the spliceosome U4/U5/U6 tri-snRNP spliceosomal complex disassembly. May also recruit the deubiquitinase USP15 to histone H2B and mediate histone deubiquitination, thereby regulating gene expression and/or DNA repair. May play a role in hematopoiesis probably through transcription regulation of specific genes including MYC. The protein is Spliceosome associated factor 3, U4/U6 recycling protein of Pongo abelii (Sumatran orangutan).